Consider the following 833-residue polypeptide: Probable serine/threonine-protein kinase DDB_G0277165 (833 aa).

Residues 9 to 262 form the Protein kinase domain; the sequence is FIIGKTLGQG…IKEIKEHPWF (254 aa). ATP is bound by residues 15–23 and lysine 38; that span reads LGQGTTGKV. The active-site Proton acceptor is the aspartate 133. Residues 288–329 enclose the UBA domain; the sequence is QIDEDIFRSLMALGVGTIDEVKQQLVSNQKSATLIYYRLLEE. Positions 338–351 are enriched in basic and acidic residues; the sequence is NKYGYKPKETRRNS. Disordered regions lie at residues 338–472, 528–626, and 764–799; these read NKYG…ISPS, QALQ…PIEI, and FINP…GGQN. Low complexity-rich tracts occupy residues 365–432 and 441–459; these read NNNN…NNNN and SSSQ…QIPS. Positions 460–472 are enriched in polar residues; the sequence is NSTSQESMQISPS. Residues 528 to 589 are compositionally biased toward low complexity; it reads QALQQHHQQQ…SSTSTSPQLS (62 aa). Polar residues predominate over residues 600-625; that stretch reads GSMTASTNPATSPTMSHRGKTSSPIE.

It belongs to the protein kinase superfamily. CAMK Ser/Thr protein kinase family.

It carries out the reaction L-seryl-[protein] + ATP = O-phospho-L-seryl-[protein] + ADP + H(+). It catalyses the reaction L-threonyl-[protein] + ATP = O-phospho-L-threonyl-[protein] + ADP + H(+). The sequence is that of Probable serine/threonine-protein kinase DDB_G0277165 from Dictyostelium discoideum (Social amoeba).